The following is a 912-amino-acid chain: Alpha-actinin-4 (912 aa).

Residues 1-267 are actin-binding; that stretch reads MVDYHAANQA…IMTYVSSFYH (267 aa). Residues 12–27 form an interaction with VCL region; sequence QYGPNSGGGNGAGGGG. The segment at 12-31 is disordered; sequence QYGPNSGGGNGAGGGGSMGD. Gly residues predominate over residues 16 to 29; it reads NSGGGNGAGGGGSM. Tyr-32 is subject to Phosphotyrosine. Residues 41-62 are interaction with VCL; the sequence is RDLLLDPAWEKQQRKTFTAWCN. Calponin-homology (CH) domains lie at 51 to 155 and 164 to 270; these read KQQR…LRFA and TSAK…HAFS. An LXXLL motif motif is present at residues 85-89; it reads LMLLL. The interaction with VCL stretch occupies residues 109 to 127; it reads KINNVNKALDFIASKGVKL. Position 115 is an N6-acetyllysine (Lys-115). The interval 178 to 193 is polyphosphoinositide (PIP2)-binding; that stretch reads TAPYKNVNVQNFHISW. The residue at position 215 (Lys-215) is an N6-acetyllysine. Residue Thr-250 is modified to Phosphothreonine. Spectrin repeat units follow at residues 294–404, 414–519, 529–640, and 650–753; these read HLME…WLLN, HLAE…ALEK, QLHL…ALLE, and HLRR…EVEN. An N6-acetyllysine mark is found at Lys-593 and Lys-626. Ser-697 carries the post-translational modification Phosphoserine. Residues 737 to 912 form a mediates interaction with MICALL2 region; sequence WEQLLTTIAR…STALYGESDL (176 aa). 2 EF-hand domains span residues 766-801 and 807-842; these read EQMQ…LGYD and QGDA…ETTD. Asp-779 contributes to the Ca(2+) binding site. Lys-780 bears the N6-acetyllysine mark. Residues Asp-781 and Glu-790 each coordinate Ca(2+). The residue at position 860 (Lys-860) is an N6-acetyllysine. Ser-910 is modified (phosphoserine).

The protein belongs to the alpha-actinin family. In terms of assembly, homodimer; antiparallel. Interacts with MAGI1. Interacts with PDLIM2. Identified in a complex with CASK, IQGAP1, MAGI2, NPHS1, SPTAN1 and SPTBN1. Identified in a IGF2BP1-dependent mRNP granule complex containing untranslated mRNAs. Component of the CART complex, at least composed of ACTN4, HGS/HRS, MYO5B and TRIM3. Binds TRIM3 at the N-terminus. Interacts with MICALL2 (preferentially in opened conformation); stimulated by RAB13 activation. Interacts with PPARG and RARA. Binds to VCL; this interaction triggers VCL conformational changes. Interacts with SEPTIN14. Interacts with IGSF8.

It localises to the nucleus. The protein resides in the cytoplasm. It is found in the cell junction. Its subcellular location is the cytoskeleton. The protein localises to the stress fiber. It localises to the perinuclear region. Its function is as follows. F-actin cross-linking protein which is thought to anchor actin to a variety of intracellular structures. This is a bundling protein. Probably involved in vesicular trafficking via its association with the CART complex. The CART complex is necessary for efficient transferrin receptor recycling but not for EGFR degradation. Involved in tight junction assembly in epithelial cells probably through interaction with MICALL2. Links MICALL2 to the actin cytoskeleton and recruits it to the tight junctions. May also function as a transcriptional coactivator, stimulating transcription mediated by the nuclear hormone receptors PPARG and RARA. Association with IGSF8 regulates the immune synapse formation and is required for efficient T-cell activation. This is Alpha-actinin-4 from Mus musculus (Mouse).